The primary structure comprises 179 residues: uncharacterized protein (179 aa).

This sequence belongs to the CAPAB/TerDEXZ family.

This is an uncharacterized protein from Synechocystis sp. (strain ATCC 27184 / PCC 6803 / Kazusa).